The primary structure comprises 342 residues: MNSCHPPQDEMAGLIGIYAFQGFYGLLSVVVYTFNIRALRHHKNNLDKSFSLLYTCCAALSLTYFLDHFLIRRFVKLGFFCEIILENFGEPNYWMMPYKTIASYCPIAILVFHALIAAHRFSIVAAPMRGVQLWDRYRRLFVLVGFLIPLIFMWFMIPCKSYAELDSEGSGGLDIEYKKVFSISSSLAAAIAAVLFGVLTLCLTFGMLIALAKLSLRKLSQAEISLIVFEVFMTVFTLIYAFTQGILYYSIYIVKDMELKSTVIQFRTFAIDIFILPQAWTLLFLSTTVRRYTLRAFGKRLGVEFLSTEIEKSARMVSVAPATISLQKSTVLNYNFTLQNLF.

7 helical membrane-spanning segments follow: residues 11-31 (MAGL…SVVV), 51-71 (SLLY…HFLI), 106-126 (PIAI…IVAA), 140-160 (LFVL…IPCK), 191-211 (IAAV…LIAL), 222-242 (AEIS…IYAF), and 269-289 (FAID…STTV).

Belongs to the nematode receptor-like protein srg family.

The protein localises to the membrane. This is Serpentine receptor class gamma-69 (srg-69) from Caenorhabditis elegans.